Consider the following 91-residue polypeptide: Acylphosphatase (91 aa).

The Acylphosphatase-like domain maps to 6-91 (CMRCYISGRV…WEDYISFDVL (86 aa)). Active-site residues include arginine 21 and asparagine 39.

Belongs to the acylphosphatase family.

It carries out the reaction an acyl phosphate + H2O = a carboxylate + phosphate + H(+). This chain is Acylphosphatase (acyP), found in Legionella pneumophila (strain Corby).